The sequence spans 804 residues: ABC transporter aclQ (804 aa).

9 consecutive transmembrane segments (helical) span residues 3-23 (LAVL…ISYL), 52-72 (FTAI…SITI), 97-117 (IAVF…PFSP), 119-139 (LSHS…LAMF), 155-175 (LQLG…ALYF), 206-226 (HGGW…LWPS), 239-259 (FVLL…LGIV), 349-369 (LVFQ…YFLI), and 373-393 (AFYS…TIYM). The region spanning 236–518 (IFCFVLLVIQ…FGSFYTQVQN (283 aa)) is the ABC transmembrane type-1 domain. N-linked (GlcNAc...) asparagine glycosylation is present at Asn460. A run of 2 helical transmembrane segments spans residues 464–484 (NLLF…QISA) and 489–509 (VAMF…LNFF). In terms of domain architecture, ABC transporter spans 552-786 (VEFTHVNFAY…NGMYSQMWAK (235 aa)). 585–592 (GESGSGKS) contacts ATP. N-linked (GlcNAc...) asparagine glycosylation is found at Asn639 and Asn797.

The protein belongs to the ABC transporter superfamily. ABCB family. Heavy Metal importer (TC 3.A.1.210) subfamily.

It localises to the membrane. In terms of biological role, ABC transporter; part of the gene cluster that mediates the biosynthesis of aspirochlorine (or antibiotic A30641), an unusual halogenated spiro compound with distinctive antifungal properties due to selective inhibition of protein biosynthesis, and which is also active against bacteria, viruses, and murine tumor cells. The protein is ABC transporter aclQ of Aspergillus oryzae (strain ATCC 42149 / RIB 40) (Yellow koji mold).